Consider the following 116-residue polypeptide: NADPH-dependent 7-cyano-7-deazaguanine reductase (116 aa).

Cys-31 serves as the catalytic Thioimide intermediate. Asp-38 functions as the Proton donor in the catalytic mechanism. Residues 53-55 (IEL) and 72-73 (YE) contribute to the substrate site.

This sequence belongs to the GTP cyclohydrolase I family. QueF type 1 subfamily.

The protein localises to the cytoplasm. The enzyme catalyses 7-aminomethyl-7-carbaguanine + 2 NADP(+) = 7-cyano-7-deazaguanine + 2 NADPH + 3 H(+). It functions in the pathway tRNA modification; tRNA-queuosine biosynthesis. Functionally, catalyzes the NADPH-dependent reduction of 7-cyano-7-deazaguanine (preQ0) to 7-aminomethyl-7-deazaguanine (preQ1). This chain is NADPH-dependent 7-cyano-7-deazaguanine reductase, found in Chlorobaculum parvum (strain DSM 263 / NCIMB 8327) (Chlorobium vibrioforme subsp. thiosulfatophilum).